The sequence spans 358 residues: Probable arabinan endo-1,5-alpha-L-arabinosidase B (358 aa).

The N-terminal stretch at 1–16 (MVLVATLFSLFTVSLC) is a signal peptide. Residue Asp39 is the Proton acceptor of the active site. Asn194 carries N-linked (GlcNAc...) asparagine glycosylation. Residues 202-227 (HLAKHPKTERVNSQDQNPDPLCRDSS) form a disordered region. The Proton donor role is filled by Glu233.

The protein belongs to the glycosyl hydrolase 43 family.

It localises to the secreted. It carries out the reaction Endohydrolysis of (1-&gt;5)-alpha-arabinofuranosidic linkages in (1-&gt;5)-arabinans.. Its pathway is glycan metabolism; L-arabinan degradation. Functionally, endo-1,5-alpha-L-arabinanase involved in degradation of pectin. Its preferred substrate is linear 1,5-alpha-L-arabinan. This is Probable arabinan endo-1,5-alpha-L-arabinosidase B (abnB) from Aspergillus flavus (strain ATCC 200026 / FGSC A1120 / IAM 13836 / NRRL 3357 / JCM 12722 / SRRC 167).